We begin with the raw amino-acid sequence, 206 residues long: Flavin reductase (NADPH) (206 aa).

NADP(+) contacts are provided by G10, T12, G13, T15, R35, S38, and R39. S42 is subject to Phosphoserine. D54, V55, L75, and G76 together coordinate NADP(+). The residue at position 82 (S82) is a Phosphoserine. The NADP(+) site is built by M87, C109, H132, H153, and I154. The S-nitroso-cysteine intermediate; for S-nitroso-CoA-dependent nitrosyltransferase activity role is filled by C109. Catalysis depends on C188, which acts as the S-nitroso-cysteine intermediate; for S-nitroso-CoA-dependent nitrosyltransferase activity.

It belongs to the BLVRB family. Monomer.

It is found in the cytoplasm. It catalyses the reaction reduced riboflavin + NADP(+) = riboflavin + NADPH + 2 H(+). The catalysed reaction is bilirubin IXbeta + NADP(+) = biliverdin IXbeta + NADPH + H(+). It carries out the reaction FMNH2 + NAD(+) = FMN + NADH + 2 H(+). The enzyme catalyses FMNH2 + NADP(+) = FMN + NADPH + 2 H(+). It catalyses the reaction S-nitroso-CoA + L-cysteinyl-[protein] = S-nitroso-L-cysteinyl-[protein] + CoA. The catalysed reaction is L-cysteinyl-[SCAN] + S-nitroso-CoA = S-nitroso-L-cysteinyl-[SCAN] + CoA. It carries out the reaction S-nitroso-L-cysteinyl-[SCAN] + L-cysteinyl-[protein] = L-cysteinyl-[SCAN] + S-nitroso-L-cysteinyl-[protein]. Functionally, enzyme that can both act as a NAD(P)H-dependent reductase and a S-nitroso-CoA-dependent nitrosyltransferase. Promotes fetal heme degradation during development. Also expressed in adult tissues, where it acts as a regulator of hematopoiesis, intermediary metabolism (glutaminolysis, glycolysis, TCA cycle and pentose phosphate pathway) and insulin signaling. Has a broad specificity oxidoreductase activity by catalyzing the NAD(P)H-dependent reduction of a variety of flavins, such as riboflavin, FAD or FMN, biliverdins, methemoglobin and PQQ (pyrroloquinoline quinone). Contributes to fetal heme catabolism by catalyzing reduction of biliverdin IXbeta into bilirubin IXbeta in the liver. Biliverdin IXbeta, which constitutes the major heme catabolite in the fetus is not present in adult. Does not reduce bilirubin IXalpha. Can also reduce the complexed Fe(3+) iron to Fe(2+) in the presence of FMN and NADPH. Acts as a protein nitrosyltransferase by catalyzing nitrosylation of cysteine residues of target proteins, such as HMOX2, INSR and IRS1. S-nitroso-CoA-dependent nitrosyltransferase activity is mediated via a 'ping-pong' mechanism: BLVRB first associates with both S-nitroso-CoA and protein substrate, nitric oxide group is then transferred from S-nitroso-CoA to Cys-109 and Cys-188 residues of BLVRB and from S-nitroso-BLVRB to the protein substrate. Inhibits insulin signaling by mediating nitrosylation of INSR and IRS1, leading to their inhibition. The polypeptide is Flavin reductase (NADPH) (Blvrb) (Mus musculus (Mouse)).